The primary structure comprises 577 residues: Efflux pump notK' (577 aa).

N-linked (GlcNAc...) asparagine glycosylation is found at asparagine 62 and asparagine 84. 5 helical membrane passes run 104-124 (AAIASVASFFLGLLANLPVAL), 151-171 (LAVTAVFVEGWIFLGLTMLGI), 189-209 (AGIGLYLTLIGLSYSAGLGLV), 241-261 (NPTMWIGIFCGGFFTVFLMMY), and 265-285 (GAVIAGILLVSIISWPRTTPV). Residue asparagine 320 is glycosylated (N-linked (GlcNAc...) asparagine). 5 consecutive transmembrane segments (helical) span residues 328–348 (FGLALITFLYVDILDATGTLY), 373–393 (VDAICISIGSLFGSPPVTAFV), 413–433 (GICFFIAVFFAPIFASIPPWA), 434–454 (TGSTLVIVGSMMMHATLEINW), and 476–496 (IADGLIAGIISYILINGGVWV). The segment covering 555 to 566 (MPPNGSMSSGSP) has biased composition (low complexity). A disordered region spans residues 555–577 (MPPNGSMSSGSPEQVAEKAVGKY). N-linked (GlcNAc...) asparagine glycosylation occurs at asparagine 558.

The protein belongs to the nucleobase:cation symporter-2 (NCS2) (TC 2.A.40) family. Azg-like subfamily.

It localises to the cell membrane. Functionally, efflux pump; part of the gene cluster that mediates the biosynthesis of notoamide, a fungal indole alkaloid that belongs to a family of natural products containing a characteristic bicyclo[2.2.2]diazaoctane core. The polypeptide is Efflux pump notK' (Aspergillus versicolor).